Reading from the N-terminus, the 505-residue chain is MSAADTAEDLPEQFRIRRDKRARLLAQGRDPYPVAVPRTHTLAEVRAAHPDLPIDTATEDIVGVAGRVIFARNSGKLCFATLQDGDGTQLQVMISLDKVGQAALDAWKADVDLGDIVYVHGAVISSRRGELSVLADCWRIAAKSLRPLPVAHKEMSEESRVRQRYVDLIVRPEARAVARLRIAVVRAIRTALQRRGFLEVETPVLQTLAGGAAARPFATHSNALDIDLYLRIAPELFLKRCIVGGFDKVFELNRVFRNEGADSTHSPEFSMLETYQTYGTYDDSAVVTRELIQEVADEAIGTRQLPLPDGSVYDIDGEWATIQMYPSLSVALGEEITPQTTVDRLRGIADSLGLEKDPAIHDNRGFGHGKLIEELWERTVGKSLSAPTFVKDFPVQTTPLTRQHRSIPGVTEKWDLYLRGIELATGYSELSDPVVQRERFADQARAAAAGDDEAMVLDEDFLAALEYGMPPCTGTGMGIDRLLMSLTGLSIRETVLFPIVRPHSN.

Mg(2+)-binding residues include Asp415 and Glu422.

Belongs to the class-II aminoacyl-tRNA synthetase family. In terms of assembly, homodimer. It depends on Mg(2+) as a cofactor.

It is found in the cytoplasm. It carries out the reaction tRNA(Lys) + L-lysine + ATP = L-lysyl-tRNA(Lys) + AMP + diphosphate. The sequence is that of Lysine--tRNA ligase 1 (lysS1) from Mycobacterium bovis (strain ATCC BAA-935 / AF2122/97).